The following is a 40-amino-acid chain: Ice-structuring protein GS-8 (40 aa).

Position 1 is a blocked amino end (Met) (Met-1).

This sequence belongs to the type-I AFP family.

Antifreeze proteins lower the blood freezing point. In Myoxocephalus aenaeus (Grubby sculpin), this protein is Ice-structuring protein GS-8.